A 994-amino-acid polypeptide reads, in one-letter code: Zinc finger protein basonuclin-1 (994 aa).

Positions 1 to 29 are disordered; it reads MRRRPPSRGGRGAARARETRRQPRHRSGR. Residues 240-249 are hydrophobic; the sequence is MTFMLPFQFF. 2 C2H2-type zinc fingers span residues 357 to 380 and 385 to 414; these read VFCT…NAVH and HKCT…PRLH. Disordered stretches follow at residues 402–425 and 444–472; these read RNRH…RDKD and TVTS…FPNI. The short motif at 533–539 is the Nuclear localization signal element; that stretch reads PKKKSRK. Phosphoserine occurs at positions 537 and 541. The segment at 555–639 is disordered; the sequence is NEKRHNLSSD…HNSERETEQT (85 aa). The segment covering 563-578 has biased composition (acidic residues); that stretch reads SDEDMPLQVVSEDEQE. The span at 603–614 shows a compositional bias: basic and acidic residues; it reads PEGERPCHRESV. Residues 615–630 are compositionally biased toward polar residues; that stretch reads IESSGAISQTPEQATH. C2H2-type zinc fingers lie at residues 720–743 and 748–775; these read FQCD…KNMH and HTCT…LNLH. Positions 859 to 877 are enriched in low complexity; the sequence is STTSSMKSESSSHSSWDSD. The interval 859-881 is disordered; sequence STTSSMKSESSSHSSWDSDGVSE. C2H2-type zinc fingers lie at residues 928–951 and 956–983; these read ITCH…KTVH and HKCK…PNLH. The segment at 970 to 994 is disordered; that stretch reads VRSRNRHSQNPNLHKSLASSPSHLQ.

In terms of assembly, interacts with HSF2BP (via C-terminus). In terms of processing, phosphorylation on Ser-537 and Ser-541 leads to cytoplasmic localization. In terms of tissue distribution, in epidermis, primarily detected in cells of the basal or immediately suprabasal layers (at protein level). In hair follicles, mainly expressed in the outer root sheath (at protein level). Expressed in epidermis, testis and foreskin, and to a lower extent in thymus, spleen, mammary glands, placenta, brain and heart. Expressed in the ovary, notably in oocytes.

Its subcellular location is the nucleus. The protein localises to the cytoplasm. It localises to the nucleoplasm. Functionally, transcriptional activator. It is likely involved in the regulation of keratinocytes terminal differentiation in squamous epithelia and hair follicles. Required for the maintenance of spermatogenesis. It is involved in the positive regulation of oocyte maturation, probably acting through the control of BMP15 levels and regulation of AKT signaling cascade. May also play a role in the early development of embryos. The protein is Zinc finger protein basonuclin-1 (BNC1) of Homo sapiens (Human).